A 139-amino-acid polypeptide reads, in one-letter code: Basic phospholipase A2 beta-bungarotoxin A2 chain (139 aa).

The N-terminal stretch at 1 to 9 (AVCVSLLGA) is a signal peptide. Residues 10-17 (ANIPPHPF) constitute a propeptide that is removed on maturation. Positions 45, 47, and 49 each coordinate Ca(2+). An intrachain disulfide couples C46 to C62. Residue H65 is part of the active site. D66 serves as a coordination point for Ca(2+).

This sequence belongs to the phospholipase A2 family. Group I subfamily. D49 sub-subfamily. In terms of assembly, heterodimer; disulfide-linked. The A chains have phospholipase A2 activity and the B chains show homology with the basic protease inhibitors. It depends on Ca(2+) as a cofactor. In terms of tissue distribution, expressed by the venom gland.

The protein resides in the secreted. The enzyme catalyses a 1,2-diacyl-sn-glycero-3-phosphocholine + H2O = a 1-acyl-sn-glycero-3-phosphocholine + a fatty acid + H(+). Functionally, snake venom phospholipase A2 (PLA2) that shows presynaptic neurotoxicity. PLA2 catalyzes the calcium-dependent hydrolysis of the 2-acyl groups in 3-sn-phosphoglycerides. The chain is Basic phospholipase A2 beta-bungarotoxin A2 chain from Bungarus candidus (Malayan krait).